The sequence spans 416 residues: Homeobox even-skipped homolog protein 1 (416 aa).

Disordered stretches follow at residues Ala30–Tyr120 and Tyr138–Ser178. Over residues Gly72 to Ala82 the composition is skewed to low complexity. The segment covering Asp102–Asp114 has biased composition (polar residues). Positions Met183–Arg242 form a DNA-binding region, homeobox.

It belongs to the even-skipped homeobox family.

The protein localises to the nucleus. In terms of biological role, may play a role in the specification of neuronal cell types. May play a role in the dorsoventral specification of mesodermal cell fate. This Mus musculus (Mouse) protein is Homeobox even-skipped homolog protein 1 (Evx1).